Consider the following 464-residue polypeptide: MLATRRLLGWSLPARVSVRFSGDTTAPKKTSFGSLKDEDRIFTNLYGRHDWRLKGSLSRGDWYKTKEILLKGPDWILGEIKTSGLRGRGGAGFPTGLKWSFMNKPSDGRPKYLVVNADEGEPGTCKDREILRHDPHKLVEGCLVGGRAMGARAAYIYIRGEFYNEASNLQVAIREAYEAGLIGKNACGSGYDFDVFVVRGAGAYICGEETALIESIEGKQGKPRLKPPFPADVGVFGCPTTVANVETVAVSPTICRRGGTWFAGFGRERNSGTKLFNISGHVNHPCTVEEEMSVPLKELIEKHAGGVTGGWDNLLAVIPGGSSTPLIPKSVCETVLMDFDALVQAQTGLGTAAVIVMDRSTDIVKAIARLIEFYKHESCGQCTPCREGVDWMNKVMARFVRGDARPAEIDSLWEISKQIEGHTICALGDGAAWPVQGLIRHFRPELEERMQRFAQQHQARQAAS.

Residues 1–20 constitute a mitochondrion transit peptide; the sequence is MLATRRLLGWSLPARVSVRF. Residue K81 is modified to N6-acetyllysine; alternate. K81 is subject to N6-succinyllysine; alternate. 87–96 serves as a coordination point for NADH; sequence GRGGAGFPTG. At K104 the chain carries N6-acetyllysine. Position 199–247 (199–247) interacts with FMN; sequence RGAGAYICGEETALIESIEGKQGKPRLKPPFPADVGVFGCPTTVANVET. At R257 the chain carries Omega-N-methylarginine. Position 375 is an N6-acetyllysine (K375). Residues C379, C382, C385, and C425 each contribute to the [4Fe-4S] cluster site.

It belongs to the complex I 51 kDa subunit family. As to quaternary structure, core subunit of respiratory chain NADH dehydrogenase (Complex I) which is composed of 45 different subunits. This is a component of the flavoprotein-sulfur (FP) fragment of the enzyme. Interacts with RAB5IF. The cofactor is FMN. [4Fe-4S] cluster is required as a cofactor.

It localises to the mitochondrion inner membrane. It catalyses the reaction a ubiquinone + NADH + 5 H(+)(in) = a ubiquinol + NAD(+) + 4 H(+)(out). In terms of biological role, core subunit of the mitochondrial membrane respiratory chain NADH dehydrogenase (Complex I) which catalyzes electron transfer from NADH through the respiratory chain, using ubiquinone as an electron acceptor. Part of the peripheral arm of the enzyme, where the electrons from NADH are accepted by flavin mononucleotide (FMN) and then passed along a chain of iron-sulfur clusters by electron tunnelling to the final acceptor ubiquinone. Contains FMN, which is the initial electron acceptor as well as one iron-sulfur cluster. The chain is NADH dehydrogenase [ubiquinone] flavoprotein 1, mitochondrial from Pan troglodytes (Chimpanzee).